Consider the following 299-residue polypeptide: Methionyl-tRNA formyltransferase (299 aa).

109–112 (SLLP) serves as a coordination point for (6S)-5,6,7,8-tetrahydrofolate.

The protein belongs to the Fmt family.

It carries out the reaction L-methionyl-tRNA(fMet) + (6R)-10-formyltetrahydrofolate = N-formyl-L-methionyl-tRNA(fMet) + (6S)-5,6,7,8-tetrahydrofolate + H(+). Attaches a formyl group to the free amino group of methionyl-tRNA(fMet). The formyl group appears to play a dual role in the initiator identity of N-formylmethionyl-tRNA by promoting its recognition by IF2 and preventing the misappropriation of this tRNA by the elongation apparatus. The sequence is that of Methionyl-tRNA formyltransferase from Wolbachia sp. subsp. Drosophila simulans (strain wRi).